The chain runs to 347 residues: MTRPRLAQGLAFFLLGGTGLWVLWKFIKDWLLVSYIPYYLPCPEFFNMKLPFRKEKPLQPVTQLQYPQPKLLEHGPTELLTLTPWLAPIVSEGTFDPELLKSMYQPLNLTIGVTVFAVGKYTCFIQRFLESAEEFFMRGYQVHYYLFTHDPTAVPRVPLGPGRLLSIIPIQGYSRWEEISMRRMETINKHIAKRAHKEVDYLFCVDVDMVFRNPWGPETLGDLVAAIHPGYFAVPRRKFPYERRQVSSAFVADNEGDFYYGGALFGGRVARVYEFTRACHMAILADKANSIMAAWQEESHLNRHFIWHKPSKVLSPEYLWDERKPRPRSLKMIRFSSVKKNANWLRT.

Residues 1–6 are Cytoplasmic-facing; it reads MTRPRL. A helical; Signal-anchor for type II membrane protein membrane pass occupies residues 7–27; it reads AQGLAFFLLGGTGLWVLWKFI. The Lumenal portion of the chain corresponds to 28–347; sequence KDWLLVSYIP…VKKNANWLRT (320 aa). N-linked (GlcNAc...) asparagine glycosylation is present at Asn108. Residues 116–121, 206–208, and 228–231 contribute to the substrate site; these read FAVGKY, DVD, and HPGY. Residues Asp206 and Asp208 each contribute to the Mn(2+) site. The Nucleophile role is filled by Glu298.

This sequence belongs to the glycosyltransferase 6 family. The cofactor is Mn(2+).

The protein resides in the golgi apparatus membrane. It carries out the reaction a globoside Gb4Cer (d18:1(4E)) + UDP-N-acetyl-alpha-D-galactosamine = a globoside Forssman (d18:1(4E)) + UDP + H(+). It catalyses the reaction a globoside Gb4Cer + UDP-N-acetyl-alpha-D-galactosamine = a globoside IV3GalNAc-Gb4Cer + UDP + H(+). The protein operates within protein modification; protein glycosylation. Catalyzes the formation of Forssman glycolipid via the addition of N-acetylgalactosamine (GalNAc) in alpha-1,3-linkage to GalNAcb-1,3Gala-1,4Galb-1,4GlcCer (Gb4Cer). Forssman glycolipid (also called Forssman antigen; FG) probably serves for adherence of some pathogens. Conversely, it diminishes Shiga toxins susceptibility. This Mus musculus (Mouse) protein is Globoside alpha-1,3-N-acetylgalactosaminyltransferase 1.